A 579-amino-acid chain; its full sequence is DELLA protein GAIP (579 aa).

The tract at residues 1-25 (MKREHHYLHPRPEPPSVATGSNRES) is disordered. The DELLA motif signature appears at 46–50 (DELLA). One can recognise a GRAS domain in the interval 202–570 (VDSQENGIQL…RPLIATSAWK (369 aa)). Residues 209–263 (IQLVHALMVCAEAVQQNNLNLAEALVKRIDYLAVSQAGAMRKVATFFAEALARRI) are leucine repeat I (LRI). A VHIID region spans residues 281–346 (QMHFYESCPY…SGPPTFRLTG (66 aa)). The VHIID signature appears at 312-316 (VHVID). The leucine repeat II (LRII) stretch occupies residues 360 to 392 (DVGWKLVKFAETLHVEFEYRGFVANSLADLDAS). Positions 404-491 (VVVNSVFELH…EMYLGKQICN (88 aa)) are PFYRE. The short motif at 412-416 (LHQLL) is the LXXLL motif element. Positions 494 to 570 (ACEGADRVER…RPLIATSAWK (77 aa)) are SAW.

It belongs to the GRAS family. DELLA subfamily. In terms of processing, phosphorylated. Post-translationally, ubiquitinated. Upon GA application it is ubiquitinated, leading to its subsequent degradation.

It is found in the nucleus. Functionally, probable transcriptional regulator that acts as a repressor of the gibberellin (GA) signaling pathway. Probably acts by participating in large multiprotein complexes that represses transcription of GA-inducible genes. Upon GA application, it is degraded by the proteasome, allowing the GA signaling pathway. This Cucurbita maxima (Pumpkin) protein is DELLA protein GAIP (GAIP).